We begin with the raw amino-acid sequence, 206 residues long: Small ribosomal subunit protein uS4 (206 aa).

Residues 96 to 156 enclose the S4 RNA-binding domain; sequence TRLDNVVYRM…EKSRTQARIK (61 aa).

Belongs to the universal ribosomal protein uS4 family. As to quaternary structure, part of the 30S ribosomal subunit. Contacts protein S5. The interaction surface between S4 and S5 is involved in control of translational fidelity.

One of the primary rRNA binding proteins, it binds directly to 16S rRNA where it nucleates assembly of the body of the 30S subunit. Its function is as follows. With S5 and S12 plays an important role in translational accuracy. The sequence is that of Small ribosomal subunit protein uS4 from Shewanella putrefaciens (strain CN-32 / ATCC BAA-453).